Here is a 198-residue protein sequence, read N- to C-terminus: ATP-dependent Clp protease proteolytic subunit (198 aa).

Residue serine 102 is the Nucleophile of the active site. Histidine 127 is an active-site residue.

The protein belongs to the peptidase S14 family. As to quaternary structure, fourteen ClpP subunits assemble into 2 heptameric rings which stack back to back to give a disk-like structure with a central cavity, resembling the structure of eukaryotic proteasomes.

Its subcellular location is the cytoplasm. The catalysed reaction is Hydrolysis of proteins to small peptides in the presence of ATP and magnesium. alpha-casein is the usual test substrate. In the absence of ATP, only oligopeptides shorter than five residues are hydrolyzed (such as succinyl-Leu-Tyr-|-NHMec, and Leu-Tyr-Leu-|-Tyr-Trp, in which cleavage of the -Tyr-|-Leu- and -Tyr-|-Trp bonds also occurs).. Cleaves peptides in various proteins in a process that requires ATP hydrolysis. Has a chymotrypsin-like activity. Plays a major role in the degradation of misfolded proteins. This Brachyspira hyodysenteriae (strain ATCC 49526 / WA1) protein is ATP-dependent Clp protease proteolytic subunit.